The primary structure comprises 1072 residues: MPRSPYRSSNRSYRSPSPSRYDRSHPSSSSRRQDDRKASRYDDDYSRDRERDRERERDRTRDYRDRDRDYDRRRDKDRYRDDDRDRRRRDDKDDRRREERDRGSDRKRDSERRSPMSTIRVDPIVSLASPVPETEEEKKRKAKERLETWKRQRALKEGKSAAATPEPKSTAPPPVTSGLPPKPTAFSLSRIGLPLKPTNPTPLKRSMAALDDEDTSDRKLQKLDLPDFDPEVQSGDAAQVGSIGADLAVADGDEDDDTVVKKEEEKEEKMDIDKKAEEDEEEDPLDAFMRDNVQQVVEVNKADAKRMGLRVAEDGSDDENQGQVVEKDKLAEAEALLQQAAAKSRKKDLPPPDHSKIDYEPFRKAFYVPPVEVLEMDEEEAELVRLEMDGIKIRGQDAPKPVRNWGAFGLPQGCLDVIKHQGWETPTSIQAQAIPAIMSGRDVIGIAKTGSGKTVAFLLPMLRHVRDQRPVSGSEGPIAVVMSPTRELASQIYKECQPFLKVLNIRASCCVGGSSISEDIAAMKKGAEVVICTPGRMIDLLTANNGRVTNVRRTTYIVMDEADRMFDMGFEPQVMKIINNVRPSAQKVLFSATFPKTMESLARRILVKPLEITVGGRSVVAPEIDQRVEVRDGDTKFTRLLEILGEMGEEHKDEDDFRTLIFVDRQESADDLFRELLQRGYVCASLHGGKEQVDRDEAIKNFKNGDVPIIVATSVAARGLDVKELKLVINYDAPNHMEDYVHRAGRTGRAGNKGTCITFITPEQERFSVDIVRALEASKAFIPDDLKKMSDSFLGKIKSGKARAAGSGYSGKGLERIERRREEKDRAEKTTYGDTSEALSLSSREGAVIPYKAKTNEFKPPETSHKGEADYTFTEIKVDIVNGPAPDRVSSQPVFNPKNAVASLPAQTLAALEKAKKEGRGVDAANLANVVAKLTQSIELTKAEKLGLAAATSAPRLAPGARTKDPDATDWHAIFPINDYPQKARWKATNKEQMTLLQEVSGASITMRGRFYPPGEEPALGGEPKLSLLIESNDEMRVRAAVEEIRRVLVEGSVQALNAVDRAGASGGRYAV.

Low complexity predominate over residues 1 to 19 (MPRSPYRSSNRSYRSPSPS). 2 disordered regions span residues 1-219 (MPRS…SDRK) and 245-293 (ADLA…RDNV). 2 stretches are compositionally biased toward basic and acidic residues: residues 20 to 114 (RYDR…ERRS) and 136 to 159 (EEKK…KEGK). The segment covering 170 to 183 (TAPPPVTSGLPPKP) has biased composition (pro residues). The span at 193–204 (LPLKPTNPTPLK) shows a compositional bias: low complexity. The segment covering 258 to 277 (TVVKKEEEKEEKMDIDKKAE) has biased composition (basic and acidic residues). The Q motif signature appears at 403 to 431 (RNWGAFGLPQGCLDVIKHQGWETPTSIQA). Residues 434–612 (IPAIMSGRDV…RRILVKPLEI (179 aa)) form the Helicase ATP-binding domain. 447 to 454 (AKTGSGKT) contributes to the ATP binding site. Residues 560–563 (DEAD) carry the DEAD box motif. Residues 639 to 790 (RLLEILGEMG…FIPDDLKKMS (152 aa)) enclose the Helicase C-terminal domain. A disordered region spans residues 803 to 839 (RAAGSGYSGKGLERIERRREEKDRAEKTTYGDTSEAL). Residues 813 to 831 (GLERIERRREEKDRAEKTT) show a composition bias toward basic and acidic residues.

This sequence belongs to the DEAD box helicase family. DDX46/PRP5 subfamily.

Its subcellular location is the nucleus. It carries out the reaction ATP + H2O = ADP + phosphate + H(+). In terms of biological role, ATP-dependent RNA helicase involved spliceosome assembly and in nuclear splicing. Catalyzes an ATP-dependent conformational change of U2 snRNP. Bridges U1 and U2 snRNPs and enables stable U2 snRNP association with intron RNA. In Cryptococcus neoformans var. neoformans serotype D (strain B-3501A) (Filobasidiella neoformans), this protein is Pre-mRNA-processing ATP-dependent RNA helicase PRP5 (PRP5).